The primary structure comprises 84 residues: Cell division topological specificity factor (84 aa).

It belongs to the MinE family.

In terms of biological role, prevents the cell division inhibition by proteins MinC and MinD at internal division sites while permitting inhibition at polar sites. This ensures cell division at the proper site by restricting the formation of a division septum at the midpoint of the long axis of the cell. The polypeptide is Cell division topological specificity factor (Ralstonia pickettii (strain 12J)).